The following is a 200-amino-acid chain: Blue fluorescence protein (200 aa).

Lumazine-binding repeat units lie at residues 1–111 (MFKG…TGGR) and 112–200 (SLSG…AGNW).

In terms of assembly, monomer.

It localises to the cytoplasm. In terms of biological role, blue fluorescence protein (BFP) that can bind 6,7-dimethyl-8-ribityllumazine, riboflavin, and 6-methyl-7-oxo-8-ribityllumazine as a bound fluorophore. Has no riboflavin-synthase activity. The chain is Blue fluorescence protein from Aliivibrio fischeri (Vibrio fischeri).